The primary structure comprises 598 residues: Elongation factor 4 (598 aa).

Residues 4-186 enclose the tr-type G domain; sequence DHIRNFSIIA…AIVKRVPPPK (183 aa). GTP-binding positions include 16–21 and 133–136; these read DHGKST and NKID.

It belongs to the TRAFAC class translation factor GTPase superfamily. Classic translation factor GTPase family. LepA subfamily.

The protein resides in the cell inner membrane. It catalyses the reaction GTP + H2O = GDP + phosphate + H(+). In terms of biological role, required for accurate and efficient protein synthesis under certain stress conditions. May act as a fidelity factor of the translation reaction, by catalyzing a one-codon backward translocation of tRNAs on improperly translocated ribosomes. Back-translocation proceeds from a post-translocation (POST) complex to a pre-translocation (PRE) complex, thus giving elongation factor G a second chance to translocate the tRNAs correctly. Binds to ribosomes in a GTP-dependent manner. The chain is Elongation factor 4 from Magnetococcus marinus (strain ATCC BAA-1437 / JCM 17883 / MC-1).